A 116-amino-acid chain; its full sequence is Non-specific lipid-transfer protein (116 aa).

A signal peptide spans methionine 1–alanine 25. 4 cysteine pairs are disulfide-bonded: cysteine 28/cysteine 75, cysteine 38/cysteine 52, cysteine 53/cysteine 98, and cysteine 73/cysteine 112.

It belongs to the plant LTP family.

Plant non-specific lipid-transfer proteins transfer phospholipids as well as galactolipids across membranes. May play a role in wax or cutin deposition in the cell walls of expanding epidermal cells and certain secretory tissues. The polypeptide is Non-specific lipid-transfer protein (Helianthus annuus (Common sunflower)).